The primary structure comprises 142 residues: Biogenesis of lysosome-related organelles complex 1 subunit 2 (142 aa).

Residues M1–A33 are disordered. Residue A2 is modified to N-acetylalanine. A compositionally biased stretch (basic and acidic residues) spans R12–A33. Residues E79–A127 are a coiled coil.

This sequence belongs to the BLOC1S2 family. Component of the biogenesis of lysosome-related organelles complex 1 (BLOC-1) composed of BLOC1S1, BLOC1S2, BLOC1S3, BLOC1S4, BLOC1S5, BLOC1S6, DTNBP1/BLOC1S7 and SNAPIN/BLOC1S8. Octamer composed of one copy each BLOC1S1, BLOC1S2, BLOC1S3, BLOC1S4, BLOC1S5, BLOC1S6, DTNBP1/BLOC1S7 and SNAPIN/BLOC1S8. Interacts directly with BLOC1S1, BLOC1S3, BLOC1S4, BLOC1S5 and SNAPIN. The BLOC-1 complex associates with the AP-3 protein complex and membrane protein cargos. Component of the BLOC-one-related complex (BORC) which is composed of BLOC1S1, BLOC1S2, BORCS5, BORCS6, BORCS7, BORCS8, KXD1 and SNAPIN. Interacts with gamma-tubulin. Interacts with IFT57. As to expression, isoform 1 and isoform 2 are widely expressed. Expressed in various malignant tumor tissues (at protein level).

It is found in the cytoplasm. It localises to the cytoskeleton. The protein localises to the microtubule organizing center. The protein resides in the centrosome. Its subcellular location is the lysosome membrane. Functionally, component of the BLOC-1 complex, a complex that is required for normal biogenesis of lysosome-related organelles (LRO), such as platelet dense granules and melanosomes. In concert with the AP-3 complex, the BLOC-1 complex is required to target membrane protein cargos into vesicles assembled at cell bodies for delivery into neurites and nerve terminals. The BLOC-1 complex, in association with SNARE proteins, is also proposed to be involved in neurite extension. As part of the BORC complex may play a role in lysosomes movement and localization at the cell periphery. Associated with the cytosolic face of lysosomes, the BORC complex may recruit ARL8B and couple lysosomes to microtubule plus-end-directed kinesin motor. May play a role in cell proliferation. This is Biogenesis of lysosome-related organelles complex 1 subunit 2 (BLOC1S2) from Homo sapiens (Human).